Reading from the N-terminus, the 140-residue chain is Lymphocyte antigen 6L (140 aa).

Positions 1 to 20 (MAPLLLVLWASLVSMELTGG) are cleaved as a signal peptide. The UPAR/Ly6 domain maps to 31 to 124 (LSCFECFKVL…GSWEGFWSLP (94 aa)). 2 disulfide bridges follow: C33/C50 and C105/C110. A lipid anchor (GPI-anchor amidated serine) is attached at S116. The propeptide at 117-140 (WEGFWSLPGRLLLPMGLGLFCTLL) is removed in mature form.

Its subcellular location is the cell membrane. This chain is Lymphocyte antigen 6L, found in Mus musculus (Mouse).